Reading from the N-terminus, the 211-residue chain is Molybdenum cofactor guanylyltransferase (211 aa).

GTP contacts are provided by residues 12-14 (LAG), Lys25, Asn55, Asp73, and Asp103. Residue Asp103 participates in Mg(2+) binding.

The protein belongs to the MobA family. As to quaternary structure, monomer. It depends on Mg(2+) as a cofactor.

The protein localises to the cytoplasm. The catalysed reaction is Mo-molybdopterin + GTP + H(+) = Mo-molybdopterin guanine dinucleotide + diphosphate. In terms of biological role, transfers a GMP moiety from GTP to Mo-molybdopterin (Mo-MPT) cofactor (Moco or molybdenum cofactor) to form Mo-molybdopterin guanine dinucleotide (Mo-MGD) cofactor. This chain is Molybdenum cofactor guanylyltransferase, found in Albidiferax ferrireducens (strain ATCC BAA-621 / DSM 15236 / T118) (Rhodoferax ferrireducens).